Consider the following 310-residue polypeptide: Putative olfactory receptor 7A2 (310 aa).

Residues 1 to 26 (MVKAGNETQISEFLLLGFSEKQELQP) are Extracellular-facing. Residue N6 is glycosylated (N-linked (GlcNAc...) asparagine). A helical transmembrane segment spans residues 27-47 (FLFGLFLSMYLVTVLGNLLII). Residues 48-55 (LAAISDSC) lie on the Cytoplasmic side of the membrane. Residues 56-76 (LHTPMYFFLSNLSFVDICFAS) traverse the membrane as a helical segment. The Extracellular portion of the chain corresponds to 77 to 100 (TMVPKMLVNIQTQSKVITYAGCIT). A disulfide bridge links C98 with C190. Residues 101–121 (QMCFFVLFIVLDSLLLTVMAY) traverse the membrane as a helical segment. Topologically, residues 122–140 (DQFVAICHPLHYTVIMSPQ) are cytoplasmic. The chain crosses the membrane as a helical span at residues 141–161 (LCGLLVLVSWIMSVLNSMLQS). Topologically, residues 162–198 (LVTLQLSFCTDLEIPHFFCELNEMIHLACSDTFVNNM) are extracellular. Residues 199–218 (VMHFAAVLLDGGPLVGILYS) traverse the membrane as a helical segment. Residues 219–238 (YCRIVSSIRAISSTQGKYKA) lie on the Cytoplasmic side of the membrane. The helical transmembrane segment at 239–259 (LSTCASHLSVVSIFYGTGLGV) threads the bilayer. The Extracellular segment spans residues 260-272 (YLSSTMTQNLHST). Residues 273 to 293 (AVASVMYTVVTPMLNPFIYSL) traverse the membrane as a helical segment. The Cytoplasmic segment spans residues 294–310 (RNKDIKGALTQFFRGKQ).

This sequence belongs to the G-protein coupled receptor 1 family.

The protein localises to the cell membrane. Its function is as follows. Odorant receptor. This is Putative olfactory receptor 7A2 (OR7A2P) from Homo sapiens (Human).